A 384-amino-acid polypeptide reads, in one-letter code: Intraflagellar transport protein 46 homolog (384 aa).

Disordered regions lie at residues 52-151 and 358-384; these read VNAE…PADY and SATD…LTLD. Positions 87–99 are enriched in basic and acidic residues; sequence EKLEEDTKRKKEP. The span at 110-138 shows a compositional bias: acidic residues; that stretch reads DEEEDEDDDDDDDDDDSDDTESDEEEEEP. The segment covering 358 to 374 has biased composition (polar residues); that stretch reads SATDGQKSDTPPASRSA.

It belongs to the IFT46 family.

The protein localises to the cytoplasm. It localises to the cytoskeleton. Its subcellular location is the cilium basal body. It is found in the cell projection. The protein resides in the cilium. Forms part of a complex involved in intraflagellar transport (IFT), the bi-directional movement of particles required for the assembly, maintenance and functioning of primary cilia. Plays a role in early embryonic development. This is Intraflagellar transport protein 46 homolog from Danio rerio (Zebrafish).